We begin with the raw amino-acid sequence, 211 residues long: Large ribosomal subunit protein uL3 (211 aa).

Residue Q150 is modified to N5-methylglutamine.

It belongs to the universal ribosomal protein uL3 family. In terms of assembly, part of the 50S ribosomal subunit. Forms a cluster with proteins L14 and L19. Post-translationally, methylated by PrmB.

One of the primary rRNA binding proteins, it binds directly near the 3'-end of the 23S rRNA, where it nucleates assembly of the 50S subunit. The polypeptide is Large ribosomal subunit protein uL3 (Pseudomonas putida (strain GB-1)).